The primary structure comprises 452 residues: Minor capsid protein (452 aa).

2 stretches are compositionally biased toward basic and acidic residues: residues 219–236 and 247–258; these read VDKPEDKPKPVFDDKGKQ and GKPDISKPGEKQ. The tract at residues 219–258 is disordered; that stretch reads VDKPEDKPKPVFDDKGKQPTDTVPPVDNGKPDISKPGEKQ.

It belongs to the closteroviridae minor capsid protein family.

It localises to the virion. Its function is as follows. Minor capsid protein that encapsidates the 5'-terminal portion of the viral genome. The polypeptide is Minor capsid protein (Lettuce infectious yellows virus (isolate United States/92) (LIYV)).